Reading from the N-terminus, the 206-residue chain is Uridine kinase (206 aa).

9–16 (GGSGSGKT) contributes to the ATP binding site.

The protein belongs to the uridine kinase family.

It localises to the cytoplasm. The enzyme catalyses uridine + ATP = UMP + ADP + H(+). It catalyses the reaction cytidine + ATP = CMP + ADP + H(+). The protein operates within pyrimidine metabolism; CTP biosynthesis via salvage pathway; CTP from cytidine: step 1/3. It functions in the pathway pyrimidine metabolism; UMP biosynthesis via salvage pathway; UMP from uridine: step 1/1. The protein is Uridine kinase of Borrelia duttonii (strain Ly).